A 346-amino-acid polypeptide reads, in one-letter code: Very-long-chain 3-oxoacyl-CoA reductase (346 aa).

Residues 19–39 (VLLGALLVGVFKLTVFILSVT) form a helical membrane-spanning segment. The NADP(+) site is built by valine 65, aspartate 119, asparagine 146, tyrosine 220, lysine 224, valine 253, and serine 255. Tyrosine 220 serves as the catalytic Proton donor. The active-site Lowers pKa of active site Tyr is lysine 224.

Belongs to the short-chain dehydrogenases/reductases (SDR) family.

It localises to the endoplasmic reticulum membrane. It catalyses the reaction a very-long-chain (3R)-3-hydroxyacyl-CoA + NADP(+) = a very-long-chain 3-oxoacyl-CoA + NADPH + H(+). It participates in lipid metabolism; fatty acid biosynthesis. In terms of biological role, component of the microsomal membrane bound fatty acid elongation system, which produces the 26-carbon very long-chain fatty acids (VLCFA) from palmitate. Catalyzes the reduction of the 3-ketoacyl-CoA intermediate that is formed in each cycle of fatty acid elongation. VLCFAs serve as precursors for ceramide and sphingolipids. The sequence is that of Very-long-chain 3-oxoacyl-CoA reductase from Scheffersomyces stipitis (strain ATCC 58785 / CBS 6054 / NBRC 10063 / NRRL Y-11545) (Yeast).